Here is a 240-residue protein sequence, read N- to C-terminus: Aquaporin Z (240 aa).

A run of 2 helical transmembrane segments spans residues 10-30 and 35-55; these read MIGT…AAGF and IGLV…AYAI. Residues 64–66 carry the NPA 1 motif; sequence NPA. Transmembrane regions (helical) follow at residues 90 to 110, 131 to 151, and 160 to 180; these read VLGA…AAGF, LVAC…VIMG, and GFAP…SIPV. The NPA 2 signature appears at 186–188; that stretch reads NPA. Residues 202–222 traverse the membrane as a helical segment; that stretch reads IGQLWLFWVAPLLGGVLGGVI.

This sequence belongs to the MIP/aquaporin (TC 1.A.8) family. Homotetramer.

Its subcellular location is the cell inner membrane. It catalyses the reaction H2O(in) = H2O(out). Functionally, channel that permits osmotically driven movement of water in both directions. It is involved in the osmoregulation and in the maintenance of cell turgor during volume expansion in rapidly growing cells. It mediates rapid entry or exit of water in response to abrupt changes in osmolarity. The polypeptide is Aquaporin Z (Rhodopseudomonas palustris (strain ATCC BAA-98 / CGA009)).